Here is a 297-residue protein sequence, read N- to C-terminus: tRNA (guanine(37)-N(1))/4-demethylwyosine(37)-methyltransferase Taw22 (297 aa).

S-adenosyl-L-methionine contacts are provided by residues Arg-89, Phe-106, and 128–129 (EL).

The protein belongs to the class I-like SAM-binding methyltransferase superfamily. TRM5/TYW2 family.

It is found in the cytoplasm. It carries out the reaction guanosine(37) in tRNA + S-adenosyl-L-methionine = N(1)-methylguanosine(37) in tRNA + S-adenosyl-L-homocysteine + H(+). The enzyme catalyses 4-demethylwyosine(37) in tRNA(Phe) + S-adenosyl-L-methionine = isowyosine(37) in tRNA(Phe) + S-adenosyl-L-homocysteine + H(+). In terms of biological role, catalyzes both the N1-methylation of guanosine and the C7-methylation of 4-demethylwyosine (imG-14) at position 37 in tRNA(Phe). This chain is tRNA (guanine(37)-N(1))/4-demethylwyosine(37)-methyltransferase Taw22, found in Nanoarchaeum equitans (strain Kin4-M).